A 276-amino-acid polypeptide reads, in one-letter code: Pantothenate synthetase (276 aa).

26-33 (MGYLHEGH) lines the ATP pocket. His33 (proton donor) is an active-site residue. Residue Gln57 coordinates (R)-pantoate. Gln57 contributes to the beta-alanine binding site. An ATP-binding site is contributed by 142 to 145 (GLKD). A (R)-pantoate-binding site is contributed by Gln148. ATP is bound by residues Ile171 and 179–182 (KSSR).

The protein belongs to the pantothenate synthetase family. In terms of assembly, homodimer.

It is found in the cytoplasm. It catalyses the reaction (R)-pantoate + beta-alanine + ATP = (R)-pantothenate + AMP + diphosphate + H(+). It functions in the pathway cofactor biosynthesis; (R)-pantothenate biosynthesis; (R)-pantothenate from (R)-pantoate and beta-alanine: step 1/1. In terms of biological role, catalyzes the condensation of pantoate with beta-alanine in an ATP-dependent reaction via a pantoyl-adenylate intermediate. In Exiguobacterium sp. (strain ATCC BAA-1283 / AT1b), this protein is Pantothenate synthetase.